Here is a 640-residue protein sequence, read N- to C-terminus: uncharacterized protein (640 aa).

The 145-residue stretch at 184-328 folds into the TIR domain; the sequence is VKRDTIFIIK…KVQRSIDTMI (145 aa). The disordered stretch occupies residues 613–640; the sequence is LPNDLDDEDEELDDSTLGRPDSDEEGGE. A compositionally biased stretch (acidic residues) spans 616–626; that stretch reads DLDDEDEELDD.

This is an uncharacterized protein from Sinorhizobium fredii (strain NBRC 101917 / NGR234).